Here is a 652-residue protein sequence, read N- to C-terminus: Type III restriction-modification enzyme StyLTI Mod subunit (652 aa).

A binding of S-adenosyl methionine region spans residues 135–138 (DPPY).

This sequence belongs to the N(4)/N(6)-methyltransferase family. In terms of assembly, homodimer, also forms a functional restriction-competent complex with Res.

It catalyses the reaction a 2'-deoxyadenosine in DNA + S-adenosyl-L-methionine = an N(6)-methyl-2'-deoxyadenosine in DNA + S-adenosyl-L-homocysteine + H(+). In terms of biological role, a beta subtype methylase that binds the system-specific DNA recognition site 5'-CAGAG-3' and methylates A-4 (of only 1 strand as the other does not have an A residue). DNA restriction requires both the Res and Mod subunits. In Salmonella typhimurium (strain LT2 / SGSC1412 / ATCC 700720), this protein is Type III restriction-modification enzyme StyLTI Mod subunit.